The sequence spans 124 residues: MTEVTKINPSTAITELEPYEMAQTNKEVPTTSLLSKDYYGHSIEEPDENNPTRWRYERPLDTVRAWQYLIDCDENFKTKPHREQNQYRPTADSFRPLSFASMESKLTQRLSRHLSKTSSRHSRL.

Interacts with dil1.

This is an uncharacterized protein from Schizosaccharomyces pombe (strain 972 / ATCC 24843) (Fission yeast).